A 130-amino-acid polypeptide reads, in one-letter code: GAWNGRLGCGCGGIAPAAELAASYGGGLGVASASAIPPVGLGVASENAYEGCVEVAGNLPFLGTAGVEGVFPTAGAGVINYGCGNGALGITAERGYGAGIGYEGLGLGYGAGIGYKGYGLGGCGCGCGRL.

The segment at 1-22 is left arm; that stretch reads GAWNGRLGCGCGGIAPAAELAA. A central domain region spans residues 23–93; that stretch reads SYGGGLGVAS…GNGALGITAE (71 aa). The right arm (Gly-rich tandem repeats) stretch occupies residues 94-130; sequence RGYGAGIGYEGLGLGYGAGIGYKGYGLGGCGCGCGRL.

It belongs to the chorion protein family.

Functionally, this protein is one of many from the eggshell of the silk moth. This Antheraea polyphemus (Polyphemus moth) protein is Chorion class B protein PC10.